A 764-amino-acid polypeptide reads, in one-letter code: Serine/threonine-protein kinase MPS1 (764 aa).

Disordered regions lie at residues 66–95, 197–216, and 258–316; these read EEMDRSSSRSHPPPSMGNLTSGHTSTSSHS, ELPLEDSHQTNFKETKRNTD, and QAAL…KSSI. The span at 85-95 shows a compositional bias: low complexity; the sequence is TSGHTSTSSHS. The span at 201 to 216 shows a compositional bias: basic and acidic residues; the sequence is EDSHQTNFKETKRNTD. 2 stretches are compositionally biased toward low complexity: residues 272–292 and 306–315; these read KSRSSSSSLSSNNLLANKDNS and STGSSSSKSS. In terms of domain architecture, Protein kinase spans 440 to 720; that stretch reads YEKIELLGRG…LSSTFLQPFM (281 aa). Residues 446 to 454 and K468 contribute to the ATP site; that span reads LGRGGSSRV. The active-site Proton acceptor is the D563.

The protein belongs to the protein kinase superfamily. Ser/Thr protein kinase family. In terms of processing, autophosphorylated.

It carries out the reaction L-seryl-[protein] + ATP = O-phospho-L-seryl-[protein] + ADP + H(+). It catalyses the reaction L-threonyl-[protein] + ATP = O-phospho-L-threonyl-[protein] + ADP + H(+). The catalysed reaction is L-tyrosyl-[protein] + ATP = O-phospho-L-tyrosyl-[protein] + ADP + H(+). Functionally, involved in mitotic spindle assembly checkpoint signaling, a process that delays anaphase until chromosomes are bioriented on the spindle, and in the repair of incorrect mitotic kinetochore-spindle microtubule attachments. Phosphorylates SPC105 on MELT motifs; phosphorylation is required for recruitment of the BUB1-BUB3 complex to kinetochores. Phosphorylates CNN1, which contributes to the enrichment of CNN1 on anaphase kinetochores. Implicated in spindle pole body (SPD) duplication. Phosphorylates the SPC29 and SPC110 spindle pole body components. The polypeptide is Serine/threonine-protein kinase MPS1 (MPS1) (Saccharomyces cerevisiae (strain ATCC 204508 / S288c) (Baker's yeast)).